The primary structure comprises 302 residues: Quinolinate synthase (302 aa).

Positions 24 and 41 each coordinate iminosuccinate. Cysteine 86 contributes to the [4Fe-4S] cluster binding site. Iminosuccinate is bound by residues 112–114 (YVN) and serine 129. Cysteine 173 lines the [4Fe-4S] cluster pocket. Iminosuccinate is bound by residues 199-201 (HPE) and threonine 216. Cysteine 259 serves as a coordination point for [4Fe-4S] cluster.

Belongs to the quinolinate synthase family. Type 2 subfamily. Requires [4Fe-4S] cluster as cofactor.

The protein resides in the cytoplasm. The catalysed reaction is iminosuccinate + dihydroxyacetone phosphate = quinolinate + phosphate + 2 H2O + H(+). It functions in the pathway cofactor biosynthesis; NAD(+) biosynthesis; quinolinate from iminoaspartate: step 1/1. Functionally, catalyzes the condensation of iminoaspartate with dihydroxyacetone phosphate to form quinolinate. In Thermococcus onnurineus (strain NA1), this protein is Quinolinate synthase.